The following is a 449-amino-acid chain: Glutamyl-tRNA reductase (449 aa).

Residues 58 to 61, S121, 126 to 128, and Q132 contribute to the substrate site; these read TCNR and ETQ. C59 functions as the Nucleophile in the catalytic mechanism. 203 to 208 serves as a coordination point for NADP(+); sequence GLGEMA.

It belongs to the glutamyl-tRNA reductase family. As to quaternary structure, homodimer.

The enzyme catalyses (S)-4-amino-5-oxopentanoate + tRNA(Glu) + NADP(+) = L-glutamyl-tRNA(Glu) + NADPH + H(+). It functions in the pathway porphyrin-containing compound metabolism; protoporphyrin-IX biosynthesis; 5-aminolevulinate from L-glutamyl-tRNA(Glu): step 1/2. Catalyzes the NADPH-dependent reduction of glutamyl-tRNA(Glu) to glutamate 1-semialdehyde (GSA). This is Glutamyl-tRNA reductase from Helicobacter pylori (strain G27).